The following is a 245-amino-acid chain: MIKLVLIRHGQSLWNLENRFTGWTDVDLSEKGLSEAREAGAILKKNGYTFDVAYTSVLKRAIRTLWIVLHEMDLAWVPVHKCWKLNERHYGALQGLNKDETAQKYGEEQVHIWRRSIDVRPPALTEDDPRYEMNDPRYKALKKGEFPLTECLVDTEKRVLAYWHSEIAPKLKNGNKVIISSHGNTIRSLVKYLDNLSSDGVVSLNIPTSIPLVYELDENLRPIRHYYLSMDGEVPEGEIPKHITF.

Substrate contacts are provided by residues 8–15, 21–22, Arg60, 87–90, Lys98, 114–115, and 183–184; these read RHGQSLWN, TG, ERHY, RR, and GN. Catalysis depends on His9, which acts as the Tele-phosphohistidine intermediate. Residue Glu87 is the Proton donor/acceptor of the active site.

The protein belongs to the phosphoglycerate mutase family. BPG-dependent PGAM subfamily.

It carries out the reaction (2R)-2-phosphoglycerate = (2R)-3-phosphoglycerate. Its pathway is carbohydrate degradation; glycolysis; pyruvate from D-glyceraldehyde 3-phosphate: step 3/5. Functionally, catalyzes the interconversion of 2-phosphoglycerate and 3-phosphoglycerate. This is 2,3-bisphosphoglycerate-dependent phosphoglycerate mutase from Bacillus cereus (strain AH187).